A 382-amino-acid polypeptide reads, in one-letter code: Nitric oxide reductase FlRd-NAD(+) reductase (382 aa).

Belongs to the FAD-dependent oxidoreductase family. It depends on FAD as a cofactor.

It is found in the cytoplasm. The enzyme catalyses 2 reduced [nitric oxide reductase rubredoxin domain] + NAD(+) + H(+) = 2 oxidized [nitric oxide reductase rubredoxin domain] + NADH. It participates in nitrogen metabolism; nitric oxide reduction. In terms of biological role, one of at least two accessory proteins for anaerobic nitric oxide (NO) reductase. Reduces the rubredoxin moiety of NO reductase. The chain is Nitric oxide reductase FlRd-NAD(+) reductase from Vibrio vulnificus (strain YJ016).